Consider the following 273-residue polypeptide: Anthocyanin regulatory C1 protein (273 aa).

HTH myb-type domains are found at residues 9–65 (KEGV…RPNI) and 66–116 (RRGN…GRRA). 2 DNA-binding regions (H-T-H motif) span residues 37–61 (WREV…LNYL) and 89–112 (WSLI…NSTL). Disordered regions lie at residues 137–164 (ATPA…SAGT) and 196–220 (AGET…SDDC). The segment covering 204–214 (AGGGGGGGGEA) has biased composition (gly residues).

It is found in the nucleus. In terms of biological role, controls the expression of genes involved in anthocyanin biosynthesis. Regulates the expression of at least 3 structural genes: chalcone synthase, dihydroflavonol reductase and flavonol O(3) glucosyltransferase. C1 acts as a trans-acting factor. The sequence is that of Anthocyanin regulatory C1 protein (C1) from Zea mays (Maize).